The primary structure comprises 610 residues: DEAD-box ATP-dependent RNA helicase 9, mitochondrial (610 aa).

The transit peptide at 1 to 66 (MISTVLRRSI…SSPFGVKVRD (66 aa)) directs the protein to the mitochondrion. The short motif at 116–144 (LAIADLGISPEIVKALKGRGIEKLFPIQK) is the Q motif element. The Helicase ATP-binding domain maps to 147–321 (LEPAMEGRDM…KKYLNNPLTI (175 aa)). 160 to 167 (ARTGTGKT) lines the ATP pocket. A DEAD box motif is present at residues 269 to 272 (DEAD). The region spanning 350–494 (IIGPLVKEHG…ELPSIAVERG (145 aa)) is the Helicase C-terminal domain. Positions 542-557 (SGRSGGGGGSYGGSGG) are enriched in gly residues. Residues 542–610 (SGRSGGGGGS…FGSNDGKRSY (69 aa)) are disordered. A compositionally biased stretch (low complexity) spans 558–572 (SSSRYSGGSDRSSGF). Residues 573 to 585 (GSFGSGGSSGGFG) are compositionally biased toward gly residues. Residues 586-596 (SDRSSQSSGRS) show a composition bias toward low complexity.

The protein belongs to the DEAD box helicase family. DDX21/DDX50 subfamily.

It localises to the mitochondrion. It catalyses the reaction ATP + H2O = ADP + phosphate + H(+). The protein is DEAD-box ATP-dependent RNA helicase 9, mitochondrial (RH9) of Arabidopsis thaliana (Mouse-ear cress).